The sequence spans 199 residues: Cutinase CUT1 (199 aa).

Residues 1–18 (MKFTTLATLALGAVSALA) form the signal peptide. Residues 19-27 (APVTELESR) constitute a propeptide that is removed on maturation. Q28 carries the pyrrolidone carboxylic acid modification. C31 and C105 are disulfide-bonded. S116 acts as the Nucleophile in catalysis. C164 and C171 form a disulfide bridge. Residue D168 is part of the active site. H181 serves as the catalytic Proton donor/acceptor.

The protein belongs to the cutinase family. In terms of processing, the 2 disulfide bonds play a critical role in holding the catalytic residues in juxta-position; reduction of the disulfide bridges results in the complete inactivation of the enzyme.

The enzyme catalyses cutin + H2O = cutin monomers.. Functionally, catalyzes the hydrolysis of complex carboxylic polyesters found in the cell wall of plants. Degrades cutin, a macromolecule that forms the structure of the plant cuticle. Also degrades suberin, a specialized macromolecule found in the cell wall of various plant tissues. In Coprinopsis cinerea (Inky cap fungus), this protein is Cutinase CUT1.